A 426-amino-acid chain; its full sequence is uncharacterized protein (426 aa).

3 Solcar repeats span residues 125 to 216 (KNNV…MKRV), 226 to 315 (HSPL…LKRT), and 334 to 422 (PNGL…CKKW). The next 6 membrane-spanning stretches (helical) occupy residues 130-151 (YFIS…LDRL), 193-213 (GINV…YEAM), 229-249 (LYSY…IYPV), 290-310 (GVLV…GTFE), 336-356 (GLVM…VFPL), and 394-415 (LYKG…SYLV).

The protein belongs to the mitochondrial carrier (TC 2.A.29) family.

The protein localises to the mitochondrion inner membrane. This is an uncharacterized protein from Schizosaccharomyces pombe (strain 972 / ATCC 24843) (Fission yeast).